A 348-amino-acid chain; its full sequence is MIKVGIIGATGYAGNELVRLLLGHKDAEIVWLGSRSYIDQNYSDVYRNMFKLVDAKCMDDNMEQLANEVDVIFTATPQGLCASLVNDEILSKTKIIDLSADFRLKDVNVYEQWYKLEHKAPQYIDEAVYGLCEINRDKVSKDTRIIANPGCYTTTSILTLYPMVKEGIINPDTIIIDAKSGTSGAGRGAKVANLFCEVNESMKAYGVGTHRHTPEIEEQLGYACGRDDLKLIFTPHLVPMNRGILVTAYANLAKDVTYEDVKAAYDKYYDKEYFVRVLPKDVCPETRWVEGSNFVDIGFKIEPRTNRLIMMGALDNLVKGAAGQAVQNMNLLFGLPENEGLQIAPMFP.

The active site involves Cys-151.

Belongs to the NAGSA dehydrogenase family. Type 1 subfamily.

The protein resides in the cytoplasm. It catalyses the reaction N-acetyl-L-glutamate 5-semialdehyde + phosphate + NADP(+) = N-acetyl-L-glutamyl 5-phosphate + NADPH + H(+). It participates in amino-acid biosynthesis; L-arginine biosynthesis; N(2)-acetyl-L-ornithine from L-glutamate: step 3/4. Functionally, catalyzes the NADPH-dependent reduction of N-acetyl-5-glutamyl phosphate to yield N-acetyl-L-glutamate 5-semialdehyde. The chain is N-acetyl-gamma-glutamyl-phosphate reductase from Lachnospira eligens (strain ATCC 27750 / DSM 3376 / VPI C15-48 / C15-B4) (Eubacterium eligens).